Consider the following 567-residue polypeptide: Thiol:disulfide interchange protein DsbD (567 aa).

The signal sequence occupies residues 1–19 (MAQRIFTLILLLCSTSAFA). 2 disulfides stabilise this stretch: Cys-122-Cys-128 and Cys-185-Cys-307. 8 consecutive transmembrane segments (helical) span residues 166–186 (LPFS…TPCV), 210–230 (LLLA…LGLV), 246–266 (YVLI…FGLF), 299–319 (IAGL…LLYI), 326–346 (WLGG…LMLV), 360–380 (WMAH…VFLL), 387–407 (AWGL…AFIT), and 418–438 (IVQI…QDWA). The 133-residue stretch at 435–567 (QDWAFGSPSA…FSAHLHDRQP (133 aa)) folds into the Thioredoxin domain. A disulfide bridge links Cys-482 with Cys-485.

The protein belongs to the thioredoxin family. DsbD subfamily.

It is found in the cell inner membrane. The enzyme catalyses [protein]-dithiol + NAD(+) = [protein]-disulfide + NADH + H(+). The catalysed reaction is [protein]-dithiol + NADP(+) = [protein]-disulfide + NADPH + H(+). Functionally, required to facilitate the formation of correct disulfide bonds in some periplasmic proteins and for the assembly of the periplasmic c-type cytochromes. Acts by transferring electrons from cytoplasmic thioredoxin to the periplasm. This transfer involves a cascade of disulfide bond formation and reduction steps. This Salmonella choleraesuis (strain SC-B67) protein is Thiol:disulfide interchange protein DsbD.